The chain runs to 529 residues: Neuronal acetylcholine receptor subunit alpha-2 (529 aa).

The signal sequence occupies residues 1–26; the sequence is MGPSCPVFLSFTKLSLWWLLLTPAGG. The disordered stretch occupies residues 27–56; it reads EEAKRPPPRAPGDPLSSPSPTALPQGGSHT. The Extracellular segment spans residues 27–264; that stretch reads EEAKRPPPRA…VTYAFIIRRL (238 aa). N-linked (GlcNAc...) asparagine glycans are attached at residues N79 and N129. A disulfide bond links C183 and C197. A glycan (N-linked (GlcNAc...) asparagine) is linked at N235. A disulfide bond links C247 and C248. 3 helical membrane-spanning segments follow: residues 265–289, 297–315, and 331–352; these read PLFYTINLIIPCLLISCLTVLVFYL, ITLCISVLLSLTVFLLLIT, and YLLFTMIFVTLSIVITVFVLNV. Residues 353–502 are Cytoplasmic-facing; the sequence is HHRSPSTHTM…WKYVAMVIDR (150 aa). The helical transmembrane segment at 503 to 521 threads the bilayer; the sequence is IFLWLFIIVCFLGTIGLFL.

Belongs to the ligand-gated ion channel (TC 1.A.9) family. Acetylcholine receptor (TC 1.A.9.1) subfamily. Alpha-2/CHRNA2 sub-subfamily. As to quaternary structure, neuronal AChR is composed of two different types of subunits: alpha and non-alpha (beta). CHRNA2/alpha-2 subunit can be combined to CHRNB2/beta-2 or CHRNB4/beta-4 to give rise to functional receptors. Both CHRNA2:CHRNB2 and CHRNA2:CHRNB4 nAChR complexes are heteropentamers with two subtypes: LS (low agonist sensitivity) with a (CHRNA2)3:(CHRNB2/4)2 and HS (high agonist sensitivity) with a (CHRNA2)2:(CHRNB2/4)3 stoichiometries; the subtypes differ in their subunit binding interfaces which are involved in ligand binding.

The protein localises to the synaptic cell membrane. Its subcellular location is the cell membrane. It catalyses the reaction Ca(2+)(in) = Ca(2+)(out). The enzyme catalyses K(+)(in) = K(+)(out). It carries out the reaction Na(+)(in) = Na(+)(out). Component of neuronal acetylcholine receptors (nAChRs) that function as pentameric, ligand-gated cation channels with high calcium permeability among other activities. nAChRs are excitatory neurotrasnmitter receptors formed by a collection of nAChR subunits known to mediate synaptic transmission in the nervous system and the neuromuscular junction. Each nAchR subunit confers differential attributes to channel properties, including activation, deactivation and desensitization kinetics, pH sensitivity, cation permeability, and binding to allosteric modulators. CHRNA2 forms heteropentameric neuronal acetylcholine receptors with CHRNB2 and CHRNB4 and plays a role in nicotine dependence. The protein is Neuronal acetylcholine receptor subunit alpha-2 (CHRNA2) of Pan troglodytes (Chimpanzee).